A 265-amino-acid polypeptide reads, in one-letter code: uncharacterized protein (265 aa).

Belongs to the MG067/MG068/MG395 family.

This is an uncharacterized protein from Mycoplasma pneumoniae (strain ATCC 29342 / M129 / Subtype 1) (Mycoplasmoides pneumoniae).